The primary structure comprises 399 residues: Tryptophan synthase beta chain (399 aa).

An N6-(pyridoxal phosphate)lysine modification is found at K90.

Belongs to the TrpB family. In terms of assembly, tetramer of two alpha and two beta chains. Pyridoxal 5'-phosphate is required as a cofactor.

The enzyme catalyses (1S,2R)-1-C-(indol-3-yl)glycerol 3-phosphate + L-serine = D-glyceraldehyde 3-phosphate + L-tryptophan + H2O. It functions in the pathway amino-acid biosynthesis; L-tryptophan biosynthesis; L-tryptophan from chorismate: step 5/5. Functionally, the beta subunit is responsible for the synthesis of L-tryptophan from indole and L-serine. The protein is Tryptophan synthase beta chain of Lactiplantibacillus plantarum (strain ATCC BAA-793 / NCIMB 8826 / WCFS1) (Lactobacillus plantarum).